Here is a 257-residue protein sequence, read N- to C-terminus: General L-amino acid transport ATP-binding protein AapP (257 aa).

One can recognise an ABC transporter domain in the interval V18–L252. Position 50 to 57 (G50 to S57) interacts with ATP.

Belongs to the ABC transporter superfamily.

Part of a binding-protein-dependent transport system for L-amino acids, affects the uptake as well as the efflux of these amino acids. Probably responsible for energy coupling to the transport system. This is General L-amino acid transport ATP-binding protein AapP (aapP) from Rhizobium johnstonii (strain DSM 114642 / LMG 32736 / 3841) (Rhizobium leguminosarum bv. viciae).